A 69-amino-acid polypeptide reads, in one-letter code: Purkinje cell protein 4-like protein 1 (69 aa).

A compositionally biased stretch (polar residues) spans 1-15; that stretch reads MSELNTKTSPATNQA. Residues 1–47 form a disordered region; the sequence is MSELNTKTSPATNQAPGPEEKGKAGSAKKTEDEEEEIDIDLTAPETE. Thr8 carries the phosphothreonine modification. Positions 18–31 are enriched in basic and acidic residues; sequence PEEKGKAGSAKKTE. One can recognise an IQ domain in the interval 46–69; it reads TEKAALAIQGKFRRFQKRKKDPSS.

Belongs to the PCP4 family.

The chain is Purkinje cell protein 4-like protein 1 (PCP4L1) from Bos taurus (Bovine).